Consider the following 275-residue polypeptide: Diaminopimelate epimerase (275 aa).

Substrate contacts are provided by asparagine 12, glutamine 45, and asparagine 65. Residue cysteine 74 is the Proton donor of the active site. Substrate is bound by residues 75 to 76, asparagine 158, asparagine 191, and 209 to 210; these read GN and ER. The active-site Proton acceptor is the cysteine 218. 219-220 provides a ligand contact to substrate; it reads GT.

Belongs to the diaminopimelate epimerase family. In terms of assembly, homodimer.

It is found in the cytoplasm. It catalyses the reaction (2S,6S)-2,6-diaminopimelate = meso-2,6-diaminopimelate. It functions in the pathway amino-acid biosynthesis; L-lysine biosynthesis via DAP pathway; DL-2,6-diaminopimelate from LL-2,6-diaminopimelate: step 1/1. Functionally, catalyzes the stereoinversion of LL-2,6-diaminopimelate (L,L-DAP) to meso-diaminopimelate (meso-DAP), a precursor of L-lysine and an essential component of the bacterial peptidoglycan. This Shewanella frigidimarina (strain NCIMB 400) protein is Diaminopimelate epimerase.